A 457-amino-acid polypeptide reads, in one-letter code: Vasoactive intestinal polypeptide receptor (457 aa).

Positions M1–G19 are cleaved as a signal peptide. Residues G20–V141 are Extracellular-facing. 3 disulfides stabilise this stretch: C51–C73, C64–C105, and C87–C122. N-linked (GlcNAc...) asparagine glycans are attached at residues N59, N70, N100, and N104. The chain crosses the membrane as a helical span at residues K142–F166. Residues R167–R173 lie on the Cytoplasmic side of the membrane. A helical membrane pass occupies residues N174–I193. Residues K194–K215 are Extracellular-facing. A disulfide bridge links C214 with C284. Residues A216 to L239 form a helical membrane-spanning segment. Over H240–Y253 the chain is Cytoplasmic. A helical transmembrane segment spans residues F254–V275. The Extracellular segment spans residues R276–P292. A helical membrane pass occupies residues I293 to I316. Residues R317–K341 lie on the Cytoplasmic side of the membrane. A helical transmembrane segment spans residues S342–P361. Topologically, residues D362–E373 are extracellular. Residues L374–G393 traverse the membrane as a helical segment. Residues E394–V457 are Cytoplasmic-facing.

It belongs to the G-protein coupled receptor 2 family. In terms of tissue distribution, expressed in pituitary, hypothalamus, small intestine and ovarian follicles.

It is found in the cell membrane. This is a receptor for VIP. The activity of this receptor is mediated by G proteins which activate adenylyl cyclase. The chain is Vasoactive intestinal polypeptide receptor (VIPR1) from Meleagris gallopavo (Wild turkey).